The chain runs to 329 residues: GDP-mannose transporter (329 aa).

The Cytoplasmic segment spans residues 1-13 (MSELKVDTGRLSH). The chain crosses the membrane as a helical span at residues 14 to 34 (IANSGPMSILAYCASSILMTV). At 35–44 (TNKCVVGSDK) the chain is on the lumenal side. The chain crosses the membrane as a helical span at residues 45-65 (FNMLFVMLFAQSLVCVTALVL). The Cytoplasmic segment spans residues 66–79 (LKALGYVQYRPLNK). The helical transmembrane segment at 80–100 (VDVKNWLLISVLLVLMTYTSS) threads the bilayer. Over 101–109 (RALKYLAVP) the chain is Lumenal. The helical transmembrane segment at 110–130 (IYTIFKNLTIILIAYGEVLFF) threads the bilayer. Residues 131 to 133 (GGR) are Cytoplasmic-facing. A helical membrane pass occupies residues 134–154 (VTAMELSSFLLIVLSSVVATL). Over 155-174 (GDQQALAKKPLAAAVESILG) the chain is Lumenal. The helical transmembrane segment at 175 to 195 (LNVGYFWMFTNCICSALFVLI) threads the bilayer. At 196–214 (MRKRIALTKFKDFDTMFYN) the chain is on the cytoplasmic side. Residues 215–235 (NILSLPLLMLASFMFEDWGAA) traverse the membrane as a helical segment. Topologically, residues 236 to 245 (NIARNLTKDY) are lumenal. N240 carries an N-linked (GlcNAc...) asparagine glycan. Residues 246–266 (IIIMIISGLASVGISYCSGWC) form a helical membrane-spanning segment. Over 267–273 (VRVTSST) the chain is Cytoplasmic. A helical transmembrane segment spans residues 274–294 (TYSMVGALNKLPIALSGLLFF). Residues 295 to 298 (DAPK) lie on the Lumenal side of the membrane. The chain crosses the membrane as a helical span at residues 299–319 (NFLSIFSIFLGFLSGIVYAVA). Topologically, residues 320–329 (KQKKQSQPAN) are cytoplasmic.

This sequence belongs to the TPT transporter family. SLC35D subfamily. In terms of assembly, homooligomer.

The protein resides in the golgi apparatus membrane. It localises to the cytoplasmic vesicle membrane. The protein localises to the endoplasmic reticulum membrane. Involved in the import of GDP-mannose from the cytoplasm into the Golgi lumen. The protein is GDP-mannose transporter (VRG4) of Eremothecium gossypii (strain ATCC 10895 / CBS 109.51 / FGSC 9923 / NRRL Y-1056) (Yeast).